We begin with the raw amino-acid sequence, 172 residues long: Conglutin-7 (172 aa).

An N-terminal signal peptide occupies residues 1-21 (MAKLTILVALALFLLAAHASA). 4 cysteine pairs are disulfide-bonded: Cys-33–Cys-116, Cys-45–Cys-103, Cys-104–Cys-152, and Cys-118–Cys-160. Residues 54 to 98 (QRDEDSYGRDPYSPSQDPYSPSQDPDRRDPYSPSPYDRRGAGSSQ) form a disordered region. Residues 62-76 (RDPYSPSQDPYSPSQ) are compositionally biased toward low complexity. Residues Pro-67, Pro-74, and Pro-86 each carry the 4-hydroxyproline modification. Residues 77-98 (DPDRRDPYSPSPYDRRGAGSSQ) are compositionally biased toward basic and acidic residues.

The protein belongs to the 2S seed storage albumins family. In terms of processing, the hydroxyproline modifications determined by mass spectrometry are probably 4-hydroxyproline as determined for other extracellular plant proteins. In terms of tissue distribution, expressed in seeds, not expressed in leaves, roots and pegs.

Functionally, weak inhibitor of trypsin. In Arachis hypogaea (Peanut), this protein is Conglutin-7.